Reading from the N-terminus, the 454-residue chain is Toluate 1,2-dioxygenase subunit alpha (454 aa).

In terms of domain architecture, Rieske spans 51 to 148 (IYLAHESQIP…SFDCDGSHDL (98 aa)). [2Fe-2S] cluster is bound by residues cysteine 92, histidine 94, cysteine 112, and histidine 115. Positions 221 and 226 each coordinate Fe cation.

Belongs to the bacterial ring-hydroxylating dioxygenase alpha subunit family. In terms of assembly, this dioxygenase system consists of three proteins: the two subunits of the hydroxylase component (XylX and XylY), and an electron transfer component (XylZ). It depends on [2Fe-2S] cluster as a cofactor. Requires Fe cation as cofactor.

It functions in the pathway xenobiotic degradation; toluene degradation. In Pseudomonas putida (Arthrobacter siderocapsulatus), this protein is Toluate 1,2-dioxygenase subunit alpha (xylX).